A 423-amino-acid chain; its full sequence is 26S proteasome regulatory subunit 6A homolog B (423 aa).

Residue S18 is modified to Phosphoserine. 211–218 is a binding site for ATP; it reads GPPGTGKT. Glycyl lysine isopeptide (Lys-Gly) (interchain with G-Cter in ubiquitin) cross-links involve residues K234, K278, and K415.

This sequence belongs to the AAA ATPase family. Component of the 19S regulatory particle (RP/PA700) base subcomplex of the 26S proteasome. The 26S proteasome is composed of a core protease (CP), known as the 20S proteasome, capped at one or both ends by the 19S regulatory particle (RP/PA700). The RP/PA700 complex is composed of at least 17 different subunits in two subcomplexes, the base and the lid, which form the portions proximal and distal to the 20S proteolytic core, respectively.

It localises to the cytoplasm. The protein localises to the nucleus. The 26S proteasome is involved in the ATP-dependent degradation of ubiquitinated proteins. The regulatory (or ATPase) complex confers ATP dependency and substrate specificity to the 26S complex. This is 26S proteasome regulatory subunit 6A homolog B (RPT5B) from Arabidopsis thaliana (Mouse-ear cress).